A 206-amino-acid polypeptide reads, in one-letter code: N-(5'-phosphoribosyl)anthranilate isomerase (206 aa).

It belongs to the TrpF family.

The catalysed reaction is N-(5-phospho-beta-D-ribosyl)anthranilate = 1-(2-carboxyphenylamino)-1-deoxy-D-ribulose 5-phosphate. It participates in amino-acid biosynthesis; L-tryptophan biosynthesis; L-tryptophan from chorismate: step 3/5. The sequence is that of N-(5'-phosphoribosyl)anthranilate isomerase from Azotobacter vinelandii (strain DJ / ATCC BAA-1303).